Consider the following 466-residue polypeptide: MTYAPVNDVLSGKLAVDSEVTVRGWIRTRRDSKAGISFLAIYDGSCFNPIQAVVPNNLNNYDNEVLKLTTGCSVEVTGKIVESPASGQAFELAASDVKVVGWVEDADTYPMAKTRHSIEYLREVAHLRPRTNVIGAVARVRNCLAQAIHRFYHEQGYFWVSAPLITASDAEGAGEMFRVSTLDMENLPRTDAGKVDYNQDFFGKETFLTVSGQLNAEAYACAISKVYTFGPTFRAENSNTSRHLAEFWMVEPEVAFADLNTVAKLAEDMLKYVFKAVLAERRDDLEFFNDRINNEVIARLEQFVESDFAQVDYTDAIEILKNCGKTFEFPVEWGIDLASEHERFLAEEHFKAPVIVKNYPKDIKAFYMRMNEDGKTVAAMDVLAPGIGEIIGGSQREERLDILDARMREFGIDPEHMDWYRDLRRYGTVPHAGFGLGFERLVSYVTGMGNVRDVIPFPRTPRSASF.

Belongs to the class-II aminoacyl-tRNA synthetase family. In terms of assembly, homodimer.

The protein resides in the cytoplasm. The enzyme catalyses tRNA(Asn) + L-asparagine + ATP = L-asparaginyl-tRNA(Asn) + AMP + diphosphate + H(+). This is Asparagine--tRNA ligase from Vibrio cholerae serotype O1 (strain ATCC 39315 / El Tor Inaba N16961).